Reading from the N-terminus, the 667-residue chain is Cyclin-dependent kinase 17 (667 aa).

Disordered stretches follow at residues 1–70 (MTAY…SSLN) and 85–184 (DSEY…LRKM). 2 stretches are compositionally biased toward acidic residues: residues 99 to 111 (EDFD…EFED) and 119 to 144 (DEDD…ITPE). Over residues 151-164 (TGVTTQTTPPSNNT) the composition is skewed to polar residues. The 282-residue stretch at 328-609 (YEKLDKLGEG…AAEAVKHPFL (282 aa)) folds into the Protein kinase domain. ATP contacts are provided by residues 334-342 (LGEGTYATV) and lysine 357. Aspartate 449 (proton acceptor) is an active-site residue. Mg(2+) is bound by residues asparagine 454 and aspartate 467. Positions 642-667 (HHHSSRRHHRGTLVKDKYRMHSSHHT) are disordered. Positions 644–653 (HSSRRHHRGT) are enriched in basic residues.

Belongs to the protein kinase superfamily. CMGC Ser/Thr protein kinase family. CDC2/CDKX subfamily. Interacts with cyy-1; the interaction is required to activate pct-1. Requires Mg(2+) as cofactor.

Its subcellular location is the cytoplasm. It is found in the cell projection. The protein resides in the dendrite. The protein localises to the axon. It catalyses the reaction L-seryl-[protein] + ATP = O-phospho-L-seryl-[protein] + ADP + H(+). The catalysed reaction is L-threonyl-[protein] + ATP = O-phospho-L-threonyl-[protein] + ADP + H(+). Serine/threonine-protein kinase, which, in association with cyy-1, regulates the trafficking of synaptic vesicles in the DA9 motor neuron and probably also in the DD motor neurons and in RIA interneurons. In terms of biological role, sufficient for synaptic vesicle trafficking in the DA9 motor neuron. This Caenorhabditis elegans protein is Cyclin-dependent kinase 17.